The chain runs to 459 residues: MRAHLITYGCQMNEYDTHLVESQLVSFGADIVSSVDEADFVLINTCAVRGKPVDKVRSLLGDLRKQKAQRPLVVGMMGCLAQLEEGQQIARKFEVDVLLGPGSLLDIGKALETNERFWGLQFKDELHGHIPPPPQGKLQAHLTIMRGCDHHCTYCIVPTTRGPQVSRHPDDILRELDLLLAAGVQEVTLLGQNVNAYGVDQGARLAGYPSFANLLRLVGRSGIRRVKFTTSHPMNFTEDVAAAMAETPAVCEYVHLPVQSGSNRVLRRMAREYTREKYLSHIAEIRRHLPDVVLATDIIVGFPGETEEDFQETLSLYDEVGYDAAYMFIYSARPGTPSYKHFADLPREVKTERLQRLIAKQKEWSARKNAAKVGTIQEVLLRGDAHDAHFLEGHTRGNHPTVVPKAAGASGPGIYRARIEHATPHMLYGRLIGEDGQDLPELPRFNPEAAGLSHPLQMV.

The region spanning 1–116 (MRAHLITYGC…IGKALETNER (116 aa)) is the MTTase N-terminal domain. Cysteine 10, cysteine 46, cysteine 79, cysteine 148, cysteine 152, and cysteine 155 together coordinate [4Fe-4S] cluster. The 234-residue stretch at 134-367 (PQGKLQAHLT…IAKQKEWSAR (234 aa)) folds into the Radical SAM core domain. The region spanning 370-433 (AAKVGTIQEV…PHMLYGRLIG (64 aa)) is the TRAM domain.

The protein belongs to the methylthiotransferase family. MiaB subfamily. As to quaternary structure, monomer. It depends on [4Fe-4S] cluster as a cofactor.

It localises to the cytoplasm. The catalysed reaction is N(6)-dimethylallyladenosine(37) in tRNA + (sulfur carrier)-SH + AH2 + 2 S-adenosyl-L-methionine = 2-methylsulfanyl-N(6)-dimethylallyladenosine(37) in tRNA + (sulfur carrier)-H + 5'-deoxyadenosine + L-methionine + A + S-adenosyl-L-homocysteine + 2 H(+). In terms of biological role, catalyzes the methylthiolation of N6-(dimethylallyl)adenosine (i(6)A), leading to the formation of 2-methylthio-N6-(dimethylallyl)adenosine (ms(2)i(6)A) at position 37 in tRNAs that read codons beginning with uridine. This Deinococcus geothermalis (strain DSM 11300 / CIP 105573 / AG-3a) protein is tRNA-2-methylthio-N(6)-dimethylallyladenosine synthase.